A 156-amino-acid chain; its full sequence is MRPRFFVVYLIAALVIAVDQWTKQWAASTIPPLIGYTVIPGFFDLVNVRNRGAAFGFLNRSDIEWQFWLFFAAAVTAVLAIIAMTRSAKSNPYLFTGFGLIMGGAIGNLIDRIRFRAVIDFLDFHIGGYHWPAFNVADMGICVGAFFVCLAVYKHK.

3 consecutive transmembrane segments (helical) span residues 5–25 (FFVVYLIAALVIAVDQWTKQW), 63–83 (IEWQFWLFFAAAVTAVLAIIA), and 90–110 (SNPYLFTGFGLIMGGAIGNLI). Residues D120 and D138 contribute to the active site. A helical membrane pass occupies residues 133–153 (AFNVADMGICVGAFFVCLAVY).

It belongs to the peptidase A8 family.

It localises to the cell inner membrane. It carries out the reaction Release of signal peptides from bacterial membrane prolipoproteins. Hydrolyzes -Xaa-Yaa-Zaa-|-(S,diacylglyceryl)Cys-, in which Xaa is hydrophobic (preferably Leu), and Yaa (Ala or Ser) and Zaa (Gly or Ala) have small, neutral side chains.. It participates in protein modification; lipoprotein biosynthesis (signal peptide cleavage). Its function is as follows. This protein specifically catalyzes the removal of signal peptides from prolipoproteins. In Oleidesulfovibrio alaskensis (strain ATCC BAA-1058 / DSM 17464 / G20) (Desulfovibrio alaskensis), this protein is Lipoprotein signal peptidase.